A 285-amino-acid chain; its full sequence is Hydrolase in pqqF 5'region (285 aa).

The region spanning 22-258 (MRVALYQCPP…EALIIGTLDR (237 aa)) is the CN hydrolase domain. The active-site Proton acceptor is E60. K131 functions as the Proton donor in the catalytic mechanism. The active-site Nucleophile is C165.

The protein belongs to the carbon-nitrogen hydrolase superfamily. NIT1/NIT2 family.

The sequence is that of Hydrolase in pqqF 5'region from Pseudomonas protegens (strain DSM 19095 / LMG 27888 / CFBP 6595 / CHA0).